The following is a 205-amino-acid chain: Ribosome maturation factor RimP (205 aa).

The protein belongs to the RimP family.

Its subcellular location is the cytoplasm. Its function is as follows. Required for maturation of 30S ribosomal subunits. The chain is Ribosome maturation factor RimP from Sinorhizobium medicae (strain WSM419) (Ensifer medicae).